We begin with the raw amino-acid sequence, 275 residues long: 4-hydroxy-tetrahydrodipicolinate reductase (275 aa).

Residues 13 to 18 (GAAGKM) and 108 to 110 (GTT) contribute to the NAD(+) site. H164 acts as the Proton donor/acceptor in catalysis. H165 contributes to the (S)-2,3,4,5-tetrahydrodipicolinate binding site. Residue K168 is the Proton donor of the active site. Residue 174–175 (GT) coordinates (S)-2,3,4,5-tetrahydrodipicolinate.

The protein belongs to the DapB family.

The protein resides in the cytoplasm. It catalyses the reaction (S)-2,3,4,5-tetrahydrodipicolinate + NAD(+) + H2O = (2S,4S)-4-hydroxy-2,3,4,5-tetrahydrodipicolinate + NADH + H(+). It carries out the reaction (S)-2,3,4,5-tetrahydrodipicolinate + NADP(+) + H2O = (2S,4S)-4-hydroxy-2,3,4,5-tetrahydrodipicolinate + NADPH + H(+). It functions in the pathway amino-acid biosynthesis; L-lysine biosynthesis via DAP pathway; (S)-tetrahydrodipicolinate from L-aspartate: step 4/4. Catalyzes the conversion of 4-hydroxy-tetrahydrodipicolinate (HTPA) to tetrahydrodipicolinate. This Rippkaea orientalis (strain PCC 8801 / RF-1) (Cyanothece sp. (strain PCC 8801)) protein is 4-hydroxy-tetrahydrodipicolinate reductase.